A 326-amino-acid chain; its full sequence is MVQLTDAFARKFYYLRLSITDVCNFRCTYCLPEGYRPDGVKSFLSLDEINRVSRAFALLGTEKIRLTGGEPSMRRDFTDIIATIRQNPAIRTLAVTTNGYRLVRDVAQWRDAGLTAINVSVDSLDPRQFHAITGQDKFYQVMQGIDAAFDAGFDKVKVNAVLMRDVNDRQLSAFLDWIKPRPIQLRFIELMETGEGGNLFRKHHVSGGVIRQQLLEQGWQQQDRARSDGPAQVFHHSDYQGEIGLIMPYEKDFCASCNRLRVSALGNLHLCLFGEQGITLRDLLGSDDQQDELIARIQSALQTKKQTHFLHQGNSGITQNLSFIGG.

One can recognise a Radical SAM core domain in the interval 7 to 240 (AFARKFYYLR…AQVFHHSDYQ (234 aa)). Position 16 (Arg16) interacts with GTP. [4Fe-4S] cluster contacts are provided by Cys23 and Cys27. An S-adenosyl-L-methionine-binding site is contributed by Tyr29. Cys30 is a [4Fe-4S] cluster binding site. Residue Arg65 participates in GTP binding. Gly69 provides a ligand contact to S-adenosyl-L-methionine. Thr96 serves as a coordination point for GTP. Ser120 contacts S-adenosyl-L-methionine. Lys157 contributes to the GTP binding site. Met191 lines the S-adenosyl-L-methionine pocket. Residues Cys254 and Cys257 each coordinate [4Fe-4S] cluster. GTP is bound at residue 259–261 (RLR). Cys271 lines the [4Fe-4S] cluster pocket.

This sequence belongs to the radical SAM superfamily. MoaA family. As to quaternary structure, monomer and homodimer. [4Fe-4S] cluster is required as a cofactor.

It catalyses the reaction GTP + AH2 + S-adenosyl-L-methionine = (8S)-3',8-cyclo-7,8-dihydroguanosine 5'-triphosphate + 5'-deoxyadenosine + L-methionine + A + H(+). It functions in the pathway cofactor biosynthesis; molybdopterin biosynthesis. Catalyzes the cyclization of GTP to (8S)-3',8-cyclo-7,8-dihydroguanosine 5'-triphosphate. The sequence is that of GTP 3',8-cyclase from Yersinia pestis.